We begin with the raw amino-acid sequence, 917 residues long: Translation initiation factor IF-2 (917 aa).

Residues 241–312 (EEAKKGTLHK…GGWRSGGGRK (72 aa)) form a disordered region. The segment covering 252-262 (AKAEGAEDKKK) has biased composition (basic and acidic residues). The segment covering 274 to 283 (SSETSSTWQE) has biased composition (polar residues). Positions 298–308 (TSGGVGGWRSG) are enriched in gly residues. The region spanning 415-582 (PRPPVVTVMG…NVLLQAEILE (168 aa)) is the tr-type G domain. Positions 424-431 (GHVDHGKT) are G1. 424 to 431 (GHVDHGKT) serves as a coordination point for GTP. The interval 449 to 453 (GITQH) is G2. Positions 470–473 (DTPG) are G3. Residues 470–474 (DTPGH) and 524–527 (NKID) each bind GTP. The G4 stretch occupies residues 524-527 (NKID). The interval 560-562 (SAK) is G5.

Belongs to the TRAFAC class translation factor GTPase superfamily. Classic translation factor GTPase family. IF-2 subfamily.

It localises to the cytoplasm. Functionally, one of the essential components for the initiation of protein synthesis. Protects formylmethionyl-tRNA from spontaneous hydrolysis and promotes its binding to the 30S ribosomal subunits. Also involved in the hydrolysis of GTP during the formation of the 70S ribosomal complex. The sequence is that of Translation initiation factor IF-2 from Polynucleobacter necessarius subsp. necessarius (strain STIR1).